Consider the following 309-residue polypeptide: CDK-activating kinase assembly factor MAT1 (309 aa).

The residue at position 1 (Met1) is an N-acetylmethionine. The segment at 6 to 50 adopts an RING-type zinc-finger fold; sequence CPRCKTTKYRNPSLKLMVNVCGHTLCESCVDLLFVRGAGNCPECG. Residue Thr51 is modified to Phosphothreonine. One can recognise a UIM domain in the interval 142-161; that stretch reads REQEELEEALEVERQEHEQR. Ser279 is subject to Phosphoserine.

Associates primarily with CDK7 and cyclin H to form the CAK complex. CAK can further associate with the core-TFIIH to form the TFIIH basal transcription factor.

Its subcellular location is the nucleus. In terms of biological role, stabilizes the cyclin H-CDK7 complex to form a functional CDK-activating kinase (CAK) enzymatic complex. CAK activates the cyclin-associated kinases CDK1, CDK2, CDK4 and CDK6 by threonine phosphorylation. CAK complexed to the core-TFIIH basal transcription factor activates RNA polymerase II by serine phosphorylation of the repetitive C-terminal domain (CTD) of its large subunit (POLR2A), allowing its escape from the promoter and elongation of the transcripts. Involved in cell cycle control and in RNA transcription by RNA polymerase II. The protein is CDK-activating kinase assembly factor MAT1 (Mnat1) of Mus musculus (Mouse).